We begin with the raw amino-acid sequence, 167 residues long: MIIQIEEYFIGMIFKGNQLVRNTIPLRREEIFNFMDGEVVSNPEDEHLKVAEIILKLYFAEIDDKKVRELISYKLEVPEFTKKVLDIVKDIEFGKTLTYGDIAKKLNTSPRAVGMALKRNPLPLIIPCHRVVAKNSLGGYSYGLDKKKFILERERLNMVSFKFNKVY.

The active-site Nucleophile; methyl group acceptor is Cys128.

The protein belongs to the MGMT family.

It localises to the cytoplasm. It catalyses the reaction a 6-O-methyl-2'-deoxyguanosine in DNA + L-cysteinyl-[protein] = S-methyl-L-cysteinyl-[protein] + a 2'-deoxyguanosine in DNA. It carries out the reaction a 4-O-methyl-thymidine in DNA + L-cysteinyl-[protein] = a thymidine in DNA + S-methyl-L-cysteinyl-[protein]. In terms of biological role, involved in the cellular defense against the biological effects of O6-methylguanine (O6-MeG) and O4-methylthymine (O4-MeT) in DNA. Repairs the methylated nucleobase in DNA by stoichiometrically transferring the methyl group to a cysteine residue in the enzyme. This is a suicide reaction: the enzyme is irreversibly inactivated. The sequence is that of Methylated-DNA--protein-cysteine methyltransferase from Methanocaldococcus jannaschii (strain ATCC 43067 / DSM 2661 / JAL-1 / JCM 10045 / NBRC 100440) (Methanococcus jannaschii).